The chain runs to 441 residues: ATP-dependent RNA helicase sub2 (441 aa).

Residues 19–29 (DAAATTAAPAA) are compositionally biased toward low complexity. A disordered region spans residues 19-43 (DAAATTAAPAANGAQDKKGDLTVSG). The short motif at 58-86 (TGFRDFLLKGELLRAITDCGFEHPSEVQQ) is the Q motif element. Positions 89–264 (IPTAILNVDV…KKFMRNPLEV (176 aa)) constitute a Helicase ATP-binding domain. Residue 102-109 (AKSGLGKT) coordinates ATP. The DEAD box motif lies at 211-214 (DECD). The Helicase C-terminal domain maps to 276-437 (GLQQYYIKLS…EYPEGGVDSS (162 aa)).

It belongs to the DEAD box helicase family. DECD subfamily.

It localises to the nucleus. It carries out the reaction ATP + H2O = ADP + phosphate + H(+). ATP-binding RNA helicase involved in transcription elongation and required for the export of mRNA out of the nucleus. SUB2 also plays a role in pre-mRNA splicing and spliceosome assembly. May be involved in rDNA and telomeric silencing, and maintenance of genome integrity. The sequence is that of ATP-dependent RNA helicase sub2 (sub2) from Neosartorya fischeri (strain ATCC 1020 / DSM 3700 / CBS 544.65 / FGSC A1164 / JCM 1740 / NRRL 181 / WB 181) (Aspergillus fischerianus).